The following is a 130-amino-acid chain: MVLLDPLANALSTIKNAEAIGKSSCIIRPASKNIGNVLKVMQDLGYIGEFEFIDDGKAGIYSVTLVGRVNKCGAIKPRYSVGTGSFERWEKQFLPAKNFGALIITTSSGVMSQYEAREKKIGGQLLAYVY.

It belongs to the universal ribosomal protein uS8 family. Part of the 30S ribosomal subunit.

In terms of biological role, one of the primary rRNA binding proteins, it binds directly to 16S rRNA central domain where it helps coordinate assembly of the platform of the 30S subunit. In Methanosarcina barkeri (strain Fusaro / DSM 804), this protein is Small ribosomal subunit protein uS8.